The sequence spans 423 residues: Maintenance of mitochondrial morphology protein 1 (423 aa).

At 1–15 the chain is on the lumenal side; the sequence is MWLDDVASELSFTQG. Residues 16 to 36 form a helical membrane-spanning segment; sequence LLLGQLSIVILIGAFIKFFIF. The Cytoplasmic portion of the chain corresponds to 37-423; that stretch reads GDPPSPDVSA…PGSMPGLSMA (387 aa). An SMP-LTD domain is found at 110–322; it reads QPESLDWFNV…EPRFQQIELP (213 aa). Disordered stretches follow at residues 327–370 and 394–423; these read RKKN…EAET and SEEG…LSMA. Residues 350–367 show a composition bias toward basic and acidic residues; the sequence is RSRDVERDLREEARKEVE.

It belongs to the MMM1 family. In terms of assembly, homodimer. Component of the ER-mitochondria encounter structure (ERMES) or MDM complex, composed of mmm1, mdm10, mdm12 and mdm34. A mmm1 homodimer associates with one molecule of mdm12 on each side in a pairwise head-to-tail manner, and the SMP-LTD domains of mmm1 and mdm12 generate a continuous hydrophobic tunnel for phospholipid trafficking.

Its subcellular location is the endoplasmic reticulum membrane. Functionally, component of the ERMES/MDM complex, which serves as a molecular tether to connect the endoplasmic reticulum (ER) and mitochondria. Components of this complex are involved in the control of mitochondrial shape and protein biogenesis, and function in nonvesicular lipid trafficking between the ER and mitochondria. The mdm12-mmm1 subcomplex functions in the major beta-barrel assembly pathway that is responsible for biogenesis of all outer membrane beta-barrel proteins, and acts in a late step after the SAM complex. The mdm10-mdm12-mmm1 subcomplex further acts in the TOM40-specific pathway after the action of the mdm12-mmm1 complex. Essential for establishing and maintaining the structure of mitochondria and maintenance of mtDNA nucleoids. This chain is Maintenance of mitochondrial morphology protein 1, found in Sclerotinia sclerotiorum (strain ATCC 18683 / 1980 / Ss-1) (White mold).